Here is a 95-residue protein sequence, read N- to C-terminus: Large ribosomal subunit protein bL25 (95 aa).

It belongs to the bacterial ribosomal protein bL25 family. As to quaternary structure, part of the 50S ribosomal subunit; part of the 5S rRNA/L5/L18/L25 subcomplex. Contacts the 5S rRNA. Binds to the 5S rRNA independently of L5 and L18.

In terms of biological role, this is one of the proteins that binds to the 5S RNA in the ribosome where it forms part of the central protuberance. The polypeptide is Large ribosomal subunit protein bL25 (Haemophilus influenzae (strain 86-028NP)).